A 312-amino-acid chain; its full sequence is Protein atonal (312 aa).

Disordered regions lie at residues 136–174 (SNVGTCKTIPASAGPKPKRSYTKKNQPSTTATSTPTAAA) and 220–248 (NDGSFDLADGENQDAAAGGSGKKRRGKQI). Residues 162–174 (PSTTATSTPTAAA) show a composition bias toward low complexity. The 53-residue stretch at 255 to 307 (KRRLAANARERRRMQNLNQAFDRLRQYLPCLGNDRQLSKHETLQMAQTYISAL) folds into the bHLH domain.

Efficient DNA binding requires dimerization with another bHLH protein. Forms a heterodimer with Daughterless. In terms of tissue distribution, proneural clusters and sense organ precursors of the chordotonal organs, optic furrow of the eye-antennal disk and developing brain lobe.

Its subcellular location is the nucleus. Its function is as follows. Developmental protein involved in neurogenesis. Required for the formation of chordotonal organs and photoreceptors. Seems to bind to E boxes. Specifically required for the photoreceptor R8 selection. The sequence is that of Protein atonal (ato) from Drosophila melanogaster (Fruit fly).